A 54-amino-acid polypeptide reads, in one-letter code: ATP synthase protein 8 (54 aa).

Residues 13–32 (ITFTFVIITLMVYILSKYIL) traverse the membrane as a helical segment.

Belongs to the ATPase protein 8 family. As to quaternary structure, F-type ATPases have 2 components, CF(1) - the catalytic core - and CF(0) - the membrane proton channel.

It localises to the mitochondrion membrane. In terms of biological role, mitochondrial membrane ATP synthase (F(1)F(0) ATP synthase or Complex V) produces ATP from ADP in the presence of a proton gradient across the membrane which is generated by electron transport complexes of the respiratory chain. F-type ATPases consist of two structural domains, F(1) - containing the extramembraneous catalytic core and F(0) - containing the membrane proton channel, linked together by a central stalk and a peripheral stalk. During catalysis, ATP synthesis in the catalytic domain of F(1) is coupled via a rotary mechanism of the central stalk subunits to proton translocation. Part of the complex F(0) domain. Minor subunit located with subunit a in the membrane. In Neurospora crassa (strain ATCC 24698 / 74-OR23-1A / CBS 708.71 / DSM 1257 / FGSC 987), this protein is ATP synthase protein 8 (atp-8).